The following is a 1119-amino-acid chain: Isoleucine--tRNA ligase (1119 aa).

The disordered stretch occupies residues Met-1–Pro-43. The 'HIGH' region motif lies at Pro-84 to His-94. The short motif at Lys-676–Ser-680 is the 'KMSKS' region element. Lys-679 provides a ligand contact to ATP.

Belongs to the class-I aminoacyl-tRNA synthetase family. IleS type 2 subfamily. In terms of assembly, monomer. The cofactor is Zn(2+).

Its subcellular location is the cytoplasm. It carries out the reaction tRNA(Ile) + L-isoleucine + ATP = L-isoleucyl-tRNA(Ile) + AMP + diphosphate. Functionally, catalyzes the attachment of isoleucine to tRNA(Ile). As IleRS can inadvertently accommodate and process structurally similar amino acids such as valine, to avoid such errors it has two additional distinct tRNA(Ile)-dependent editing activities. One activity is designated as 'pretransfer' editing and involves the hydrolysis of activated Val-AMP. The other activity is designated 'posttransfer' editing and involves deacylation of mischarged Val-tRNA(Ile). This chain is Isoleucine--tRNA ligase, found in Leifsonia xyli subsp. xyli (strain CTCB07).